Here is a 279-residue protein sequence, read N- to C-terminus: Orotidine 5'-phosphate decarboxylase (279 aa).

Substrate-binding positions include Asp-8, Lys-30, 58 to 67, Thr-117, Arg-177, Gln-186, Gly-206, and Arg-207; that span reads DLKFHDIPNT. The Proton donor role is filled by Lys-60.

The protein belongs to the OMP decarboxylase family. Type 1 subfamily. Homodimer.

It catalyses the reaction orotidine 5'-phosphate + H(+) = UMP + CO2. Its pathway is pyrimidine metabolism; UMP biosynthesis via de novo pathway; UMP from orotate: step 2/2. Catalyzes the decarboxylation of orotidine 5'-monophosphate (OMP) to uridine 5'-monophosphate (UMP). This is Orotidine 5'-phosphate decarboxylase from Campylobacter jejuni subsp. jejuni serotype O:2 (strain ATCC 700819 / NCTC 11168).